The sequence spans 894 residues: Mitogen-activated protein kinase kinase kinase kinase 3 (894 aa).

N-acetylmethionine is present on Met1. The Protein kinase domain occupies Phe16–Val273. Residues Ile22 to Val30, Lys45, and Lys48 contribute to the ATP site. Residue Asp136 is the Proton acceptor of the active site. A phosphoserine mark is found at Ser329 and Ser398. Positions Ala410–Leu536 are disordered. The segment covering Gln473–Lys487 has biased composition (pro residues). Positions Asn513 to Pro529 are enriched in basic and acidic residues. Positions Pro556–Val867 constitute a CNH domain.

Belongs to the protein kinase superfamily. STE Ser/Thr protein kinase family. STE20 subfamily. Interacts with SH3GL2. Interaction appears to regulate MAP4K3-mediated JNK activation. The cofactor is Mg(2+). In terms of tissue distribution, ubiquitously expressed in all tissues examined, with high levels in heart, brain, placenta, skeletal muscle, kidney and pancreas and lower levels in lung and liver.

It catalyses the reaction L-seryl-[protein] + ATP = O-phospho-L-seryl-[protein] + ADP + H(+). The enzyme catalyses L-threonyl-[protein] + ATP = O-phospho-L-threonyl-[protein] + ADP + H(+). Functionally, serine/threonine kinase that plays a role in the response to environmental stress. Appears to act upstream of the JUN N-terminal pathway. Activator of the Hippo signaling pathway which plays a pivotal role in organ size control and tumor suppression by restricting proliferation and promoting apoptosis. MAP4Ks act in parallel to and are partially redundant with STK3/MST2 and STK4/MST2 in the phosphorylation and activation of LATS1/2, and establish MAP4Ks as components of the expanded Hippo pathway. The polypeptide is Mitogen-activated protein kinase kinase kinase kinase 3 (Homo sapiens (Human)).